We begin with the raw amino-acid sequence, 233 residues long: Fibrillarin-like rRNA/tRNA 2'-O-methyltransferase (233 aa).

S-adenosyl-L-methionine contacts are provided by residues 90-91, 109-110, 134-135, and 154-157; these read TT, EF, DA, and DVAQ.

The protein belongs to the methyltransferase superfamily. Fibrillarin family. Interacts with nop5. Component of box C/D small ribonucleoprotein (sRNP) particles that contain rpl7ae, FlpA and nop5, plus a guide RNA.

Involved in pre-rRNA and tRNA processing. Utilizes the methyl donor S-adenosyl-L-methionine to catalyze the site-specific 2'-hydroxyl methylation of ribose moieties in rRNA and tRNA. Site specificity is provided by a guide RNA that base pairs with the substrate. Methylation occurs at a characteristic distance from the sequence involved in base pairing with the guide RNA. In Aeropyrum pernix (strain ATCC 700893 / DSM 11879 / JCM 9820 / NBRC 100138 / K1), this protein is Fibrillarin-like rRNA/tRNA 2'-O-methyltransferase.